A 36-amino-acid polypeptide reads, in one-letter code: WNPFKELERAGQRVRDAIISAGPAVATVAQATALAK.

Lys-36 is modified (lysine amide).

The protein belongs to the cecropin family.

Its subcellular location is the secreted. Its function is as follows. Cecropins have lytic and antibacterial activity against several Gram-positive and Gram-negative bacteria. In Antheraea pernyi (Chinese oak silk moth), this protein is Cecropin-D.